Reading from the N-terminus, the 388-residue chain is Chorismate synthase (388 aa).

Positions 39 and 45 each coordinate NADP(+). The disordered stretch occupies residues 95–118; the sequence is EKNEKSRRVSRPRPGHADLVGGMK. FMN contacts are provided by residues 130–132, 251–252, G296, 311–315, and R337; these read RSS, NA, and KPIPT.

This sequence belongs to the chorismate synthase family. In terms of assembly, homotetramer. FMNH2 is required as a cofactor.

The enzyme catalyses 5-O-(1-carboxyvinyl)-3-phosphoshikimate = chorismate + phosphate. It participates in metabolic intermediate biosynthesis; chorismate biosynthesis; chorismate from D-erythrose 4-phosphate and phosphoenolpyruvate: step 7/7. Catalyzes the anti-1,4-elimination of the C-3 phosphate and the C-6 proR hydrogen from 5-enolpyruvylshikimate-3-phosphate (EPSP) to yield chorismate, which is the branch point compound that serves as the starting substrate for the three terminal pathways of aromatic amino acid biosynthesis. This reaction introduces a second double bond into the aromatic ring system. The sequence is that of Chorismate synthase from Listeria monocytogenes serotype 4b (strain F2365).